The primary structure comprises 558 residues: Phosphatidylserine lipase ABHD16A (558 aa).

2 consecutive transmembrane segments (helical) span residues 60 to 80 (ILAL…FAFF) and 93 to 113 (VVPF…VACL). Residues 114 to 558 (RGIGRWTNPQ…AQHFQMPWCL (445 aa)) lie on the Cytoplasmic side of the membrane. The AB hydrolase-1 domain maps to 281 to 407 (LVICCEGNAG…LVTRTVRQHL (127 aa)). Residues S355, D430, and H507 each act as charge relay system in the active site.

It belongs to the AB hydrolase superfamily. ABHD16 family.

It localises to the membrane. The catalysed reaction is 1-heptadecanoyl-2-(5Z,8Z,11Z,14Z-eicosatetraenoyl)-sn-glycero-3-phosphoserine + H2O = 1-heptadecanoyl-sn-glycero-3-phosphoserine + (5Z,8Z,11Z,14Z)-eicosatetraenoate + H(+). It carries out the reaction 1-hexadecanoyl-2-(9Z-octadecenoyl)-sn-glycero-3-phospho-L-serine + H2O = 1-hexadecanoyl-sn-glycero-3-phospho-L-serine + (9Z)-octadecenoate + H(+). The enzyme catalyses 1-octadecanoyl-2-(9Z,12Z-octadecadienoyl)-sn-glycero-3-phosphoserine + H2O = 1-octadecanoyl-sn-glycero-3-phosphoserine + (9Z,12Z)-octadecadienoate + H(+). It catalyses the reaction 1-heptadecanoyl-2-(5Z,8Z,11Z,14Z-eicosatetraenoyl)-sn-glycero-3-phosphocholine + H2O = 1-heptadecanoyl-sn-glycero-3-phosphocholine + (5Z,8Z,11Z,14Z)-eicosatetraenoate + H(+). The catalysed reaction is 1-hexadecanoyl-2-(9Z-octadecenoyl)-sn-glycero-3-phosphoglycerol + H2O = 1-hexadecanoyl-sn-glycero-3-phosphoglycerol + (9Z)-octadecenoate + H(+). It carries out the reaction 1-hexadecanoyl-2-(9Z-octadecenoyl)-sn-glycero-3-phospho-(1D-myo-inositol) + H2O = 1-hexadecanoyl-sn-glycero-3-phospho-(1D-myo-inositol) + (9Z)-octadecenoate + H(+). The enzyme catalyses 1-heptadecanoyl-2-(5Z,8Z,11Z,14Z-eicosatetraenoyl)-sn-glycero-3-phosphoethanolamine + H2O = 1-heptadecanoyl-sn-glycero-3-phosphoethanolamine + (5Z,8Z,11Z,14Z)-eicosatetraenoate + H(+). It catalyses the reaction 1-hexadecanoyl-2-(9Z-octadecenoyl)-sn-glycero-3-phospho-(1'-sn-glycerol) + H2O = 1-hexadecanoyl-sn-glycero-3-phospho-(1'-sn-glycerol) + (9Z)-octadecenoate + H(+). The catalysed reaction is Hydrolyzes glycerol monoesters of long-chain fatty acids.. It carries out the reaction 1-tetradecanoylglycerol + H2O = tetradecanoate + glycerol + H(+). The enzyme catalyses 2-hexadecanoylglycerol + H2O = glycerol + hexadecanoate + H(+). It catalyses the reaction 1-(9Z-octadecenoyl)-glycerol + H2O = glycerol + (9Z)-octadecenoate + H(+). The catalysed reaction is 2-(9Z-octadecenoyl)-glycerol + H2O = glycerol + (9Z)-octadecenoate + H(+). It carries out the reaction 2-(9Z,12Z-octadecadienoyl)-glycerol + H2O = (9Z,12Z)-octadecadienoate + glycerol + H(+). The enzyme catalyses 1-(5Z,8Z,11Z,14Z-eicosatetraenoyl)-glycerol + H2O = glycerol + (5Z,8Z,11Z,14Z)-eicosatetraenoate + H(+). It catalyses the reaction 2-(5Z,8Z,11Z,14Z-eicosatetraenoyl)-glycerol + H2O = glycerol + (5Z,8Z,11Z,14Z)-eicosatetraenoate + H(+). The catalysed reaction is prostaglandin D2-1-glycerol ester + H2O = prostaglandin D2 + glycerol + H(+). It carries out the reaction 2-glyceryl-15-deoxy-Delta(12,14)-prostaglandin J2 + H2O = 15-deoxy-Delta(12,14)-prostaglandin J2 + glycerol + H(+). The enzyme catalyses 1-(9Z,12Z-octadecadienoyl)-glycerol + H2O = (9Z,12Z)-octadecadienoate + glycerol + H(+). Functionally, phosphatidylserine (PS) lipase that mediates the hydrolysis of phosphatidylserine to generate lysophosphatidylserine (LPS). LPS constitutes a class of signaling lipids that regulates immunological and neurological processes. Has no activity towards diacylglycerol, triacylglycerol or lysophosphatidylserine lipase. Also has monoacylglycerol lipase activity, with preference for 1-(9Z,12Z-octadecadienoyl)-glycerol (1-LG) and 2-glyceryl-15-deoxy-Delta(12,14)-prostaglandin J2 (15d-PGJ(2)-G). This is Phosphatidylserine lipase ABHD16A from Rattus norvegicus (Rat).